The chain runs to 439 residues: Tol-Pal system protein TolB (439 aa).

The first 22 residues, 1 to 22 (MKKPLRWLAALTVLLLPLSALA), serve as a signal peptide directing secretion.

It belongs to the TolB family. In terms of assembly, the Tol-Pal system is composed of five core proteins: the inner membrane proteins TolA, TolQ and TolR, the periplasmic protein TolB and the outer membrane protein Pal. They form a network linking the inner and outer membranes and the peptidoglycan layer.

It localises to the periplasm. Functionally, part of the Tol-Pal system, which plays a role in outer membrane invagination during cell division and is important for maintaining outer membrane integrity. The chain is Tol-Pal system protein TolB from Xanthomonas oryzae pv. oryzae (strain MAFF 311018).